A 442-amino-acid polypeptide reads, in one-letter code: uncharacterized protein (442 aa).

Residues 1 to 23 form the signal peptide; the sequence is MEILLIVLGAVVAGLLCPVQTAA. 2 disordered regions span residues 36-67 and 91-115; these read TSIS…NSSD and ANET…TNTR. Over residues 48–67 the composition is skewed to low complexity; the sequence is TSSGELSQSTFSSSSTNSSD. 11 N-linked (GlcNAc...) asparagine glycosylation sites follow: N64, N92, N99, N130, N174, N225, N244, N346, N363, N386, and N398.

The protein resides in the secreted. This is an uncharacterized protein from Arthroderma benhamiae (strain ATCC MYA-4681 / CBS 112371) (Trichophyton mentagrophytes).